A 270-amino-acid chain; its full sequence is NADPH-dependent 7-cyano-7-deazaguanine reductase (270 aa).

79-81 provides a ligand contact to substrate; that stretch reads IES. 81–82 serves as a coordination point for NADPH; sequence SK. The active-site Thioimide intermediate is the Cys-177. Asp-184 acts as the Proton donor in catalysis. 216-217 is a substrate binding site; the sequence is HE. 245 to 246 contributes to the NADPH binding site; the sequence is RG.

The protein belongs to the GTP cyclohydrolase I family. QueF type 2 subfamily. As to quaternary structure, homodimer.

The protein localises to the cytoplasm. It carries out the reaction 7-aminomethyl-7-carbaguanine + 2 NADP(+) = 7-cyano-7-deazaguanine + 2 NADPH + 3 H(+). Its pathway is tRNA modification; tRNA-queuosine biosynthesis. Its function is as follows. Catalyzes the NADPH-dependent reduction of 7-cyano-7-deazaguanine (preQ0) to 7-aminomethyl-7-deazaguanine (preQ1). This is NADPH-dependent 7-cyano-7-deazaguanine reductase from Acinetobacter baumannii (strain ACICU).